The sequence spans 182 residues: Sec-independent protein translocase protein TatB (182 aa).

A helical membrane pass occupies residues Met1–Gly21. 2 disordered regions span residues Gln87 to Glu107 and Thr121 to Pro182. A compositionally biased stretch (low complexity) spans Ala168 to Pro182.

Belongs to the TatB family. In terms of assembly, the Tat system comprises two distinct complexes: a TatABC complex, containing multiple copies of TatA, TatB and TatC subunits, and a separate TatA complex, containing only TatA subunits. Substrates initially bind to the TatABC complex, which probably triggers association of the separate TatA complex to form the active translocon.

Its subcellular location is the cell inner membrane. Part of the twin-arginine translocation (Tat) system that transports large folded proteins containing a characteristic twin-arginine motif in their signal peptide across membranes. Together with TatC, TatB is part of a receptor directly interacting with Tat signal peptides. TatB may form an oligomeric binding site that transiently accommodates folded Tat precursor proteins before their translocation. This Salmonella choleraesuis (strain SC-B67) protein is Sec-independent protein translocase protein TatB.